Reading from the N-terminus, the 302-residue chain is UDP-N-acetylenolpyruvoylglucosamine reductase (302 aa).

Positions 23–188 constitute an FAD-binding PCMH-type domain; the sequence is KVGGNAEIFF…LKAVFKVNKG (166 aa). Arg-168 is an active-site residue. Catalysis depends on Ser-217, which acts as the Proton donor. The active site involves Glu-287.

The protein belongs to the MurB family. Requires FAD as cofactor.

Its subcellular location is the cytoplasm. The catalysed reaction is UDP-N-acetyl-alpha-D-muramate + NADP(+) = UDP-N-acetyl-3-O-(1-carboxyvinyl)-alpha-D-glucosamine + NADPH + H(+). The protein operates within cell wall biogenesis; peptidoglycan biosynthesis. Cell wall formation. The protein is UDP-N-acetylenolpyruvoylglucosamine reductase of Rickettsia bellii (strain RML369-C).